Here is a 406-residue protein sequence, read N- to C-terminus: Probable tRNA sulfurtransferase (406 aa).

The region spanning 60–166 (DQVMNRLKLV…LNGIFLSSET (107 aa)) is the THUMP domain. ATP is bound by residues 184-185 (MM), 209-210 (HF), R266, G288, and Q297.

This sequence belongs to the ThiI family.

It is found in the cytoplasm. It catalyses the reaction [ThiI sulfur-carrier protein]-S-sulfanyl-L-cysteine + a uridine in tRNA + 2 reduced [2Fe-2S]-[ferredoxin] + ATP + H(+) = [ThiI sulfur-carrier protein]-L-cysteine + a 4-thiouridine in tRNA + 2 oxidized [2Fe-2S]-[ferredoxin] + AMP + diphosphate. The enzyme catalyses [ThiS sulfur-carrier protein]-C-terminal Gly-Gly-AMP + S-sulfanyl-L-cysteinyl-[cysteine desulfurase] + AH2 = [ThiS sulfur-carrier protein]-C-terminal-Gly-aminoethanethioate + L-cysteinyl-[cysteine desulfurase] + A + AMP + 2 H(+). It functions in the pathway cofactor biosynthesis; thiamine diphosphate biosynthesis. In terms of biological role, catalyzes the ATP-dependent transfer of a sulfur to tRNA to produce 4-thiouridine in position 8 of tRNAs, which functions as a near-UV photosensor. Also catalyzes the transfer of sulfur to the sulfur carrier protein ThiS, forming ThiS-thiocarboxylate. This is a step in the synthesis of thiazole, in the thiamine biosynthesis pathway. The sulfur is donated as persulfide by IscS. The polypeptide is Probable tRNA sulfurtransferase (Limosilactobacillus reuteri subsp. reuteri (strain JCM 1112) (Lactobacillus reuteri)).